The sequence spans 725 residues: MSTSNDPSNNASAGKCPFHAETPKQSAGSGTANRDWWPNQLRVDLLNQHSNRSNPLGENFNYREEFKKLDYSALKADLRALLTDSQEWWPADWGSYIGLFIRMAWHGAGTYRTVDGRGGAGRGQQRFAPLNSWPDNVSLDKARRLLWPVKQKYGQKISWADLYMLAGNVALENAGFRTFGFGAGREDVWEPDLDVDWGDEKEWLAHRHPESLAKQAIGATEMGLIYVNPEGPNASGEPLSAAAAIRATFGNMAMDDEEIVALIAGGHTLGKTHGAAETSHVGAEPEAAPLEAQGLGWHSSYGSGAGADAITSGLEVVWTQTPTQWSNYFFENLFKYEWVQTRSPAGAIQFEAKDAPEIIPDPFNPEKKRKPTMLVTDLTLRFDPEFEKISRRFLNDPQAFNEAFARAWFKLTHRDMGPKSRYLGPEVPKEDLIWQDPLPAATHQPSAEDIASLKTAIAGAGLSVSELVSVAWASASTFRGGDKRGGANGARLALAPQKDWPVNAIASRVLPTLQAIQRASGKASLADIIVLAGVVGVEQAAAAAGVSVNVPFTPGRVDALPEQTDVESFDLLQPLADGFRNYRRIEGGVSTETLLIDKAQQLTLTAPEMTVLVGGLRVLGANYDGSKHGVFTDRVGVLSNDFFVNLLDMATVWKAADDNAELFTGSDRKTGEAKYSATRVDLVFGSNSVLRALAEVYACADGQQKLVHDFVAAWTKVMNLDRFDL.

Composition is skewed to polar residues over residues 1-12 (MSTSNDPSNNAS) and 23-32 (PKQSAGSGTA). The signal sequence occupies residues 1–20 (MSTSNDPSNNASAGKCPFHA). The tract at residues 1–35 (MSTSNDPSNNASAGKCPFHAETPKQSAGSGTANRD) is disordered. Residues 105 to 226 (WHGAGTYRTV…IGATEMGLIY (122 aa)) constitute a cross-link (tryptophyl-tyrosyl-methioninium (Trp-Tyr) (with M-252)). His106 serves as the catalytic Proton acceptor. A cross-link (tryptophyl-tyrosyl-methioninium (Tyr-Met) (with W-105)) is located at residues 226–252 (YVNPEGPNASGEPLSAAAAIRATFGNM). A heme b-binding site is contributed by His267.

It belongs to the peroxidase family. Peroxidase/catalase subfamily. In terms of assembly, homodimer or homotetramer. The cofactor is heme b. Post-translationally, formation of the three residue Trp-Tyr-Met cross-link is important for the catalase, but not the peroxidase activity of the enzyme.

The enzyme catalyses H2O2 + AH2 = A + 2 H2O. It carries out the reaction 2 H2O2 = O2 + 2 H2O. Bifunctional enzyme with both catalase and broad-spectrum peroxidase activity. The polypeptide is Catalase-peroxidase (Klebsiella pneumoniae subsp. pneumoniae (strain ATCC 700721 / MGH 78578)).